Here is a 65-residue protein sequence, read N- to C-terminus: Conotoxin tx3c (65 aa).

The first 19 residues, Met-1–Ala-19, serve as a signal peptide directing secretion. Positions Val-20 to Ala-50 are excised as a propeptide. 3 disulfides stabilise this stretch: Cys-53–Cys-64, Cys-54–Cys-60, and Cys-57–Cys-63. Position 62 is a 4-hydroxyproline; partial (Pro-62). Cys-64 bears the Cysteine amide mark.

The hydroxylation at Pro-62 is observed in PubMed:15924437, PubMed:19380747 and PubMed:22709442, and the non-hydroxylation is described in PubMed:22709442. Expressed by the venom duct.

Its subcellular location is the secreted. Functionally, causes scratching in mice. The protein is Conotoxin tx3c of Conus textile (Cloth-of-gold cone).